The sequence spans 619 residues: Hypermethylated in cancer 2 protein (619 aa).

Positions 46–109 constitute a BTB domain; the sequence is CDVIIMVENS…IYTGKLLPSD (64 aa). Ser166, Ser169, and Ser197 each carry phosphoserine. 2 disordered regions span residues 180–293 and 307–426; these read DVRK…VGNS and MDVE…GHTG. Residues 214-228 are compositionally biased toward gly residues; that stretch reads LGLGGPAGGEMGLGG. Positions 247-249 are binding to CtBP; it reads DLS. Residues 281-293 are compositionally biased toward polar residues; sequence APTSTSALPVGNS. Basic and acidic residues predominate over residues 337–357; that stretch reads KKDWNKKEPVAGSPFDRRETG. Ser349 and Ser416 each carry phosphoserine. 5 consecutive C2H2-type zinc fingers follow at residues 446 to 468, 509 to 531, 537 to 559, 565 to 587, and 593 to 615; these read YVCIPCAKGFPSSEQLNAHVETH, FKCSVCEKTYKDPATLRQHEKTH, FPCNICGKMFTQRGTMTRHMRSH, FACDECGMRFTRQYRLTEHMRVH, and YECQLCGGKFTQQRNLISHLRMH.

The protein belongs to the krueppel C2H2-type zinc-finger protein family. Hic subfamily. Self-associates. Interacts with HIC1.

The protein localises to the nucleus. Functionally, transcriptional repressor. The chain is Hypermethylated in cancer 2 protein (Hic2) from Mus musculus (Mouse).